Here is a 220-residue protein sequence, read N- to C-terminus: Deoxyribose-phosphate aldolase (220 aa).

The active-site Proton donor/acceptor is the Asp-89. Catalysis depends on Lys-151, which acts as the Schiff-base intermediate with acetaldehyde. Lys-180 serves as the catalytic Proton donor/acceptor.

This sequence belongs to the DeoC/FbaB aldolase family. DeoC type 1 subfamily.

The protein localises to the cytoplasm. The catalysed reaction is 2-deoxy-D-ribose 5-phosphate = D-glyceraldehyde 3-phosphate + acetaldehyde. It functions in the pathway carbohydrate degradation; 2-deoxy-D-ribose 1-phosphate degradation; D-glyceraldehyde 3-phosphate and acetaldehyde from 2-deoxy-alpha-D-ribose 1-phosphate: step 2/2. Functionally, catalyzes a reversible aldol reaction between acetaldehyde and D-glyceraldehyde 3-phosphate to generate 2-deoxy-D-ribose 5-phosphate. The chain is Deoxyribose-phosphate aldolase from Streptococcus pneumoniae serotype 2 (strain D39 / NCTC 7466).